The primary structure comprises 490 residues: Protein nucleotidyltransferase YdiU (490 aa).

Gly89, Gly91, Arg92, Lys112, Asp124, Gly125, Arg175, and Arg182 together coordinate ATP. Asp251 serves as the catalytic Proton acceptor. Mg(2+) contacts are provided by Asn252 and Asp261. Position 261 (Asp261) interacts with ATP.

The protein belongs to the SELO family. Requires Mg(2+) as cofactor. Mn(2+) serves as cofactor.

It carries out the reaction L-seryl-[protein] + ATP = 3-O-(5'-adenylyl)-L-seryl-[protein] + diphosphate. The enzyme catalyses L-threonyl-[protein] + ATP = 3-O-(5'-adenylyl)-L-threonyl-[protein] + diphosphate. It catalyses the reaction L-tyrosyl-[protein] + ATP = O-(5'-adenylyl)-L-tyrosyl-[protein] + diphosphate. The catalysed reaction is L-histidyl-[protein] + UTP = N(tele)-(5'-uridylyl)-L-histidyl-[protein] + diphosphate. It carries out the reaction L-seryl-[protein] + UTP = O-(5'-uridylyl)-L-seryl-[protein] + diphosphate. The enzyme catalyses L-tyrosyl-[protein] + UTP = O-(5'-uridylyl)-L-tyrosyl-[protein] + diphosphate. In terms of biological role, nucleotidyltransferase involved in the post-translational modification of proteins. It can catalyze the addition of adenosine monophosphate (AMP) or uridine monophosphate (UMP) to a protein, resulting in modifications known as AMPylation and UMPylation. In Vibrio vulnificus (strain CMCP6), this protein is Protein nucleotidyltransferase YdiU.